The primary structure comprises 567 residues: Protein NRT1/ PTR FAMILY 4.5 (567 aa).

A run of 12 helical transmembrane segments spans residues 30-50 (GMLA…AFLA), 70-92 (SSSE…GFLA), 99-118 (FVIF…LLTI), 147-167 (AFLF…KGSL), 189-209 (FFNY…TFVV), 219-239 (WGFG…LLGS), 326-346 (IVLK…CLAQ), 374-394 (VFPV…IIPF), 411-431 (IGVG…VELK), 448-468 (LPIT…ADLF), 491-511 (SLSW…VPIV), and 535-555 (LFYW…LFWA).

It belongs to the major facilitator superfamily. Proton-dependent oligopeptide transporter (POT/PTR) (TC 2.A.17) family. As to expression, expressed in flowers and siliques.

It is found in the membrane. In terms of biological role, involved in abscisic acid transport. This chain is Protein NRT1/ PTR FAMILY 4.5 (NPF4.5), found in Arabidopsis thaliana (Mouse-ear cress).